A 448-amino-acid polypeptide reads, in one-letter code: Glucose-6-phosphate isomerase (448 aa).

E290 functions as the Proton donor in the catalytic mechanism. Active-site residues include H311 and K425.

Belongs to the GPI family.

Its subcellular location is the cytoplasm. It catalyses the reaction alpha-D-glucose 6-phosphate = beta-D-fructose 6-phosphate. It functions in the pathway carbohydrate biosynthesis; gluconeogenesis. The protein operates within carbohydrate degradation; glycolysis; D-glyceraldehyde 3-phosphate and glycerone phosphate from D-glucose: step 2/4. Its function is as follows. Catalyzes the reversible isomerization of glucose-6-phosphate to fructose-6-phosphate. This chain is Glucose-6-phosphate isomerase, found in Lactococcus lactis subsp. cremoris (strain SK11).